The sequence spans 430 residues: Histidine--tRNA ligase (430 aa).

This sequence belongs to the class-II aminoacyl-tRNA synthetase family. Homodimer.

It localises to the cytoplasm. It carries out the reaction tRNA(His) + L-histidine + ATP = L-histidyl-tRNA(His) + AMP + diphosphate + H(+). This chain is Histidine--tRNA ligase, found in Anaplasma marginale (strain Florida).